A 198-amino-acid chain; its full sequence is Na(+)-translocating NADH-quinone reductase subunit E (198 aa).

Transmembrane regions (helical) follow at residues 11–31, 39–59, 77–97, 110–130, 140–160, and 176–196; these read SIFI…FLAV, MGLG…NNLI, FLSF…LEMA, GIFL…SFMV, VVYG…MAGI, and LGIT…FSGI.

The protein belongs to the NqrDE/RnfAE family. As to quaternary structure, composed of six subunits; NqrA, NqrB, NqrC, NqrD, NqrE and NqrF.

The protein resides in the cell inner membrane. The enzyme catalyses a ubiquinone + n Na(+)(in) + NADH + H(+) = a ubiquinol + n Na(+)(out) + NAD(+). NQR complex catalyzes the reduction of ubiquinone-1 to ubiquinol by two successive reactions, coupled with the transport of Na(+) ions from the cytoplasm to the periplasm. NqrA to NqrE are probably involved in the second step, the conversion of ubisemiquinone to ubiquinol. This chain is Na(+)-translocating NADH-quinone reductase subunit E, found in Aeromonas salmonicida (strain A449).